The following is a 398-amino-acid chain: Phosphoglycerate kinase (398 aa).

Substrate-binding positions include 21-23, R36, 59-62, R119, and R157; these read DFN and HLGR. ATP contacts are provided by residues K208, G296, E327, and 354 to 357; that span reads GGDS.

It belongs to the phosphoglycerate kinase family. Monomer.

It is found in the cytoplasm. It carries out the reaction (2R)-3-phosphoglycerate + ATP = (2R)-3-phospho-glyceroyl phosphate + ADP. Its pathway is carbohydrate degradation; glycolysis; pyruvate from D-glyceraldehyde 3-phosphate: step 2/5. This is Phosphoglycerate kinase from Streptococcus equi subsp. zooepidemicus (strain H70).